The following is a 452-amino-acid chain: Mitochondrial distribution and morphology protein 10 (452 aa).

The protein belongs to the MDM10 family. Component of the ER-mitochondria encounter structure (ERMES) or MDM complex, composed of MMM1, MDM10, MDM12 and MDM34. Associates with the mitochondrial outer membrane sorting assembly machinery SAM(core) complex.

It localises to the mitochondrion outer membrane. Its function is as follows. Component of the ERMES/MDM complex, which serves as a molecular tether to connect the endoplasmic reticulum and mitochondria. Components of this complex are involved in the control of mitochondrial shape and protein biogenesis and may function in phospholipid exchange. MDM10 is involved in the late assembly steps of the general translocase of the mitochondrial outer membrane (TOM complex). Functions in the TOM40-specific route of the assembly of outer membrane beta-barrel proteins, including the association of TOM40 with the receptor TOM22 and small TOM proteins. Can associate with the SAM(core) complex as well as the MDM12-MMM1 complex, both involved in late steps of the major beta-barrel assembly pathway, that is responsible for biogenesis of all outer membrane beta-barrel proteins. May act as a switch that shuttles between both complexes and channels precursor proteins into the TOM40-specific pathway. Plays a role in mitochondrial morphology and in the inheritance of mitochondria. The sequence is that of Mitochondrial distribution and morphology protein 10 from Kluyveromyces lactis (strain ATCC 8585 / CBS 2359 / DSM 70799 / NBRC 1267 / NRRL Y-1140 / WM37) (Yeast).